A 444-amino-acid chain; its full sequence is Glycerol-3-phosphate transporter (444 aa).

Topologically, residues 1–36 (MLNIFKPAPHIERLDDSKMDAAYKRLRLQVFIGIFI) are cytoplasmic. Residues 37–57 (GYAGYYLLRKNFAFAIPYLQE) form a helical membrane-spanning segment. Over 58–63 (QGFSKT) the chain is Extracellular. A helical transmembrane segment spans residues 64–84 (ELGLVLAAVSIAYGFSKFIMG). The Cytoplasmic segment spans residues 85–93 (MVSDRCNPR). A helical membrane pass occupies residues 94–112 (YFLATGLFLSAIVNILFVS). The Extracellular portion of the chain corresponds to 113–120 (MPWVTSSV). Residues 121–141 (TIMFIFMFINGWFQGMGWPPC) traverse the membrane as a helical segment. At 142–160 (GRTMAHWFSISERGTKMSI) the chain is on the cytoplasmic side. Residues 161–180 (WNVAHNIGGGILAPLVTLGI) form a helical membrane-spanning segment. At 181 to 189 (AMFVTWKSV) the chain is on the extracellular side. Residues 190 to 207 (FFFPAIIAIIISFLIVLL) form a helical membrane-spanning segment. The Cytoplasmic portion of the chain corresponds to 208 to 261 (VRDTPQSCGLPPIEEYRNDYPKHAFKNQEKELTTKEILFQYVLNNKFLWYIAFA). The helical transmembrane segment at 262-282 (NVFVYFVRYGVVDWAPTYLTE) threads the bilayer. Topologically, residues 283-287 (AKGFS) are extracellular. Residues 288-308 (PEDSRWSYFLYEYAGIPGTIL) form a helical membrane-spanning segment. At 309 to 321 (CGWISDRFFKSRR) the chain is on the cytoplasmic side. The helical transmembrane segment at 322-341 (APAGVLFMAGVFIAVLVYWL) threads the bilayer. Residues 342–346 (NPAGN) lie on the Extracellular side of the membrane. Residues 347–368 (PLVDNIALISIGFLIYGPVMLI) traverse the membrane as a helical segment. Residues 369 to 387 (GLQAIDLAPKKAAGTAAGL) lie on the Cytoplasmic side of the membrane. Residues 388–409 (TGFFGYIGGSAFANAIMGFVVD) form a helical membrane-spanning segment. Residues 410–414 (RFNWN) lie on the Extracellular side of the membrane. A helical transmembrane segment spans residues 415-435 (GGFIMLISSCILAIVFLALTW). At 436 to 444 (NTGKRAEHV) the chain is on the cytoplasmic side.

This sequence belongs to the major facilitator superfamily. Organophosphate:Pi antiporter (OPA) (TC 2.A.1.4) family.

It localises to the cell membrane. Responsible for glycerol-3-phosphate uptake. The sequence is that of Glycerol-3-phosphate transporter (glpT) from Bacillus subtilis (strain 168).